The sequence spans 457 residues: Flavohemoprotein-2 (457 aa).

The region spanning 2 to 157 (ALSEDTIKAV…LADLLIKREE (156 aa)) is the Globin domain. A heme b-binding site is contributed by histidine 106. Residues tyrosine 116 and glutamate 156 each act as charge relay system in the active site. A reductase region spans residues 168-456 (GGWRQTRTFR…FEMFGPFKAS (289 aa)). An FAD-binding FR-type domain is found at 171 to 278 (RQTRTFRVEE…APPYGDFFLR (108 aa)). FAD contacts are provided by residues tyrosine 210 and 227–230 (RQYS). An NADP(+)-binding site is contributed by 320 to 325 (GIGQTP). 449–452 (MFGP) provides a ligand contact to FAD.

It belongs to the globin family. Two-domain flavohemoproteins subfamily. In the C-terminal section; belongs to the flavoprotein pyridine nucleotide cytochrome reductase family. As to quaternary structure, monomer. Heme b serves as cofactor. FAD is required as a cofactor.

It carries out the reaction 2 nitric oxide + NADPH + 2 O2 = 2 nitrate + NADP(+) + H(+). The enzyme catalyses 2 nitric oxide + NADH + 2 O2 = 2 nitrate + NAD(+) + H(+). Flavohemoprotein involved in nitric oxide (NO) detoxification in an aerobic process, termed nitric oxide dioxygenase (NOD) reaction that utilizes O(2) and NAD(P)H to convert NO to nitrate, which protects the protozoan parasite from various noxious nitrogen compounds. Therefore, plays a central role in the inducible response to nitrosative stress. May also be involved in O(2) detoxification. The sequence is that of Flavohemoprotein-2 (hmpA-2) from Giardia intestinalis (strain P15) (Giardia lamblia).